The following is a 706-amino-acid chain: Glycine--tRNA ligase beta subunit (706 aa).

It belongs to the class-II aminoacyl-tRNA synthetase family. In terms of assembly, tetramer of two alpha and two beta subunits.

Its subcellular location is the cytoplasm. The enzyme catalyses tRNA(Gly) + glycine + ATP = glycyl-tRNA(Gly) + AMP + diphosphate. This is Glycine--tRNA ligase beta subunit from Acidobacterium capsulatum (strain ATCC 51196 / DSM 11244 / BCRC 80197 / JCM 7670 / NBRC 15755 / NCIMB 13165 / 161).